A 481-amino-acid chain; its full sequence is Proline--tRNA ligase (481 aa).

Belongs to the class-II aminoacyl-tRNA synthetase family. ProS type 3 subfamily. Homodimer.

Its subcellular location is the cytoplasm. It catalyses the reaction tRNA(Pro) + L-proline + ATP = L-prolyl-tRNA(Pro) + AMP + diphosphate. Its function is as follows. Catalyzes the attachment of proline to tRNA(Pro) in a two-step reaction: proline is first activated by ATP to form Pro-AMP and then transferred to the acceptor end of tRNA(Pro). This Chlorobium phaeobacteroides (strain BS1) protein is Proline--tRNA ligase.